Reading from the N-terminus, the 446-residue chain is Phosphoglucosamine mutase (446 aa).

Ser-103 functions as the Phosphoserine intermediate in the catalytic mechanism. Positions 103, 242, 244, and 246 each coordinate Mg(2+). Residue Ser-103 is modified to Phosphoserine.

Belongs to the phosphohexose mutase family. Requires Mg(2+) as cofactor. In terms of processing, activated by phosphorylation.

It carries out the reaction alpha-D-glucosamine 1-phosphate = D-glucosamine 6-phosphate. Its function is as follows. Catalyzes the conversion of glucosamine-6-phosphate to glucosamine-1-phosphate. The sequence is that of Phosphoglucosamine mutase from Corynebacterium urealyticum (strain ATCC 43042 / DSM 7109).